Here is a 321-residue protein sequence, read N- to C-terminus: F-box protein At4g35930 (321 aa).

Residues 1 to 13 (MGKVSPKDLDSKT) are compositionally biased toward basic and acidic residues. A disordered region spans residues 1 to 23 (MGKVSPKDLDSKTSVRKKKLKSS). The region spanning 159 to 207 (ESQLESLPMDLLVKIVCHLHHDQLKAVFHVSQRIRMATILARQYHFNYT) is the F-box domain. The disordered stretch occupies residues 228–258 (WPFRRGDGNPTMVSSPHTPKAPKHAPRPPSR).

The polypeptide is F-box protein At4g35930 (Arabidopsis thaliana (Mouse-ear cress)).